The primary structure comprises 399 residues: Galactokinase (399 aa).

42 to 45 (EHTD) is a substrate binding site. Residues S76 and 133–139 (ASGLSSS) each bind ATP. The Mg(2+) site is built by S139 and E171. Residue D183 is the Proton acceptor of the active site. Residue Y233 coordinates substrate.

This sequence belongs to the GHMP kinase family. GalK subfamily.

It is found in the cytoplasm. The enzyme catalyses alpha-D-galactose + ATP = alpha-D-galactose 1-phosphate + ADP + H(+). Its pathway is carbohydrate metabolism; galactose metabolism. Its function is as follows. Catalyzes the transfer of the gamma-phosphate of ATP to D-galactose to form alpha-D-galactose-1-phosphate (Gal-1-P). This is Galactokinase from Lactococcus lactis subsp. cremoris (strain MG1363).